A 410-amino-acid polypeptide reads, in one-letter code: Argininosuccinate synthase (410 aa).

10–18 (AYSGGLDTS) is a binding site for ATP. Residues Tyr-88 and Ser-93 each coordinate L-citrulline. Position 118 (Gly-118) interacts with ATP. Positions 120, 124, and 125 each coordinate L-aspartate. Asn-124 serves as a coordination point for L-citrulline. Residues Arg-128, Ser-177, Ser-186, Glu-262, and Tyr-274 each coordinate L-citrulline.

It belongs to the argininosuccinate synthase family. Type 1 subfamily. In terms of assembly, homotetramer.

The protein localises to the cytoplasm. It carries out the reaction L-citrulline + L-aspartate + ATP = 2-(N(omega)-L-arginino)succinate + AMP + diphosphate + H(+). The protein operates within amino-acid biosynthesis; L-arginine biosynthesis; L-arginine from L-ornithine and carbamoyl phosphate: step 2/3. This chain is Argininosuccinate synthase, found in Thermoanaerobacter sp. (strain X514).